We begin with the raw amino-acid sequence, 120 residues long: UPF0295 protein Aflv_0370 (120 aa).

Transmembrane regions (helical) follow at residues 12-32 (IRTF…GGIF) and 42-62 (LFMI…FWIG).

The protein belongs to the UPF0295 family.

Its subcellular location is the cell membrane. This Anoxybacillus flavithermus (strain DSM 21510 / WK1) protein is UPF0295 protein Aflv_0370.